The primary structure comprises 363 residues: Phosphoserine aminotransferase (363 aa).

R42 is an L-glutamate binding site. Residues 76-77 (GR), W102, T156, D175, and Q198 each bind pyridoxal 5'-phosphate. K199 carries the N6-(pyridoxal phosphate)lysine modification. Residue 240–241 (NT) coordinates pyridoxal 5'-phosphate.

The protein belongs to the class-V pyridoxal-phosphate-dependent aminotransferase family. SerC subfamily. Homodimer. It depends on pyridoxal 5'-phosphate as a cofactor.

The protein resides in the cytoplasm. The enzyme catalyses O-phospho-L-serine + 2-oxoglutarate = 3-phosphooxypyruvate + L-glutamate. The catalysed reaction is 4-(phosphooxy)-L-threonine + 2-oxoglutarate = (R)-3-hydroxy-2-oxo-4-phosphooxybutanoate + L-glutamate. Its pathway is amino-acid biosynthesis; L-serine biosynthesis; L-serine from 3-phospho-D-glycerate: step 2/3. It functions in the pathway cofactor biosynthesis; pyridoxine 5'-phosphate biosynthesis; pyridoxine 5'-phosphate from D-erythrose 4-phosphate: step 3/5. Its function is as follows. Catalyzes the reversible conversion of 3-phosphohydroxypyruvate to phosphoserine and of 3-hydroxy-2-oxo-4-phosphonooxybutanoate to phosphohydroxythreonine. The protein is Phosphoserine aminotransferase of Shewanella halifaxensis (strain HAW-EB4).